Consider the following 570-residue polypeptide: Sulfite reductase [NADPH] hemoprotein beta-component (570 aa).

Cys-434, Cys-440, Cys-479, and Cys-483 together coordinate [4Fe-4S] cluster. Cys-483 contributes to the siroheme binding site.

The protein belongs to the nitrite and sulfite reductase 4Fe-4S domain family. In terms of assembly, alpha(8)-beta(8). The alpha component is a flavoprotein, the beta component is a hemoprotein. Requires siroheme as cofactor. The cofactor is [4Fe-4S] cluster.

It carries out the reaction hydrogen sulfide + 3 NADP(+) + 3 H2O = sulfite + 3 NADPH + 4 H(+). It functions in the pathway sulfur metabolism; hydrogen sulfide biosynthesis; hydrogen sulfide from sulfite (NADPH route): step 1/1. Component of the sulfite reductase complex that catalyzes the 6-electron reduction of sulfite to sulfide. This is one of several activities required for the biosynthesis of L-cysteine from sulfate. The protein is Sulfite reductase [NADPH] hemoprotein beta-component of Shigella boydii serotype 4 (strain Sb227).